The chain runs to 61 residues: Photosystem II reaction center protein K (61 aa).

A propeptide spanning residues 1-24 (MINIVSLVCIYINSVPYSSIFFLD) is cleaved from the precursor. Residues 36 to 56 (IVDIMPVIPLFFFLLAFVWQA) form a helical membrane-spanning segment.

The protein belongs to the PsbK family. PSII is composed of 1 copy each of membrane proteins PsbA, PsbB, PsbC, PsbD, PsbE, PsbF, PsbH, PsbI, PsbJ, PsbK, PsbL, PsbM, PsbT, PsbX, PsbY, PsbZ, Psb30/Ycf12, at least 3 peripheral proteins of the oxygen-evolving complex and a large number of cofactors. It forms dimeric complexes.

Its subcellular location is the plastid. It is found in the chloroplast thylakoid membrane. Functionally, one of the components of the core complex of photosystem II (PSII). PSII is a light-driven water:plastoquinone oxidoreductase that uses light energy to abstract electrons from H(2)O, generating O(2) and a proton gradient subsequently used for ATP formation. It consists of a core antenna complex that captures photons, and an electron transfer chain that converts photonic excitation into a charge separation. The polypeptide is Photosystem II reaction center protein K (Lotus japonicus (Lotus corniculatus var. japonicus)).